We begin with the raw amino-acid sequence, 164 residues long: NADH-quinone oxidoreductase subunit I 2 (164 aa).

2 4Fe-4S ferredoxin-type domains span residues 39–71 and 81–110; these read IVLT…VVKA and ESFR…LTPD. Residues cysteine 51, cysteine 54, cysteine 57, cysteine 61, cysteine 90, cysteine 93, cysteine 96, and cysteine 100 each coordinate [4Fe-4S] cluster.

Belongs to the complex I 23 kDa subunit family. In terms of assembly, NDH-1 is composed of 14 different subunits. Subunits NuoA, H, J, K, L, M, N constitute the membrane sector of the complex. It depends on [4Fe-4S] cluster as a cofactor.

The protein localises to the cell inner membrane. The catalysed reaction is a quinone + NADH + 5 H(+)(in) = a quinol + NAD(+) + 4 H(+)(out). NDH-1 shuttles electrons from NADH, via FMN and iron-sulfur (Fe-S) centers, to quinones in the respiratory chain. The immediate electron acceptor for the enzyme in this species is believed to be ubiquinone. Couples the redox reaction to proton translocation (for every two electrons transferred, four hydrogen ions are translocated across the cytoplasmic membrane), and thus conserves the redox energy in a proton gradient. In Cereibacter sphaeroides (strain ATCC 17023 / DSM 158 / JCM 6121 / CCUG 31486 / LMG 2827 / NBRC 12203 / NCIMB 8253 / ATH 2.4.1.) (Rhodobacter sphaeroides), this protein is NADH-quinone oxidoreductase subunit I 2.